A 166-amino-acid chain; its full sequence is NADH-quinone oxidoreductase subunit A (166 aa).

The next 3 helical transmembrane spans lie at 16-36 (FAVF…GAYF), 68-88 (FYLV…LYAW), and 98-118 (IGFI…FYLV). The interval 141–166 (RYASSHPQDISQELSVAGSQQANESR) is disordered.

It belongs to the complex I subunit 3 family. As to quaternary structure, NDH-1 is composed of 13 different subunits. Subunits NuoA, H, J, K, L, M, N constitute the membrane sector of the complex.

Its subcellular location is the cell inner membrane. The catalysed reaction is a quinone + NADH + 5 H(+)(in) = a quinol + NAD(+) + 4 H(+)(out). NDH-1 shuttles electrons from NADH, via FMN and iron-sulfur (Fe-S) centers, to quinones in the respiratory chain. The immediate electron acceptor for the enzyme in this species is believed to be ubiquinone. Couples the redox reaction to proton translocation (for every two electrons transferred, four hydrogen ions are translocated across the cytoplasmic membrane), and thus conserves the redox energy in a proton gradient. This Yersinia pseudotuberculosis serotype IB (strain PB1/+) protein is NADH-quinone oxidoreductase subunit A.